The following is an 875-amino-acid chain: Lysine-specific demethylase JMJ26 (875 aa).

The disordered stretch occupies residues 31 to 103 (KPVEATSLSS…RSSVKKRATT (73 aa)). A Nuclear localization signal motif is present at residues 62–69 (RKRSKADE). Over residues 79–93 (KCDDENKCEENEKKQ) the composition is skewed to basic and acidic residues. Positions 193, 196, 207, 210, 216, 219, 236, 239, 322, 325, 339, and 347 each coordinate Zn(2+). Residues 193–240 (CHQCSKGERRYLFICTFCEVRLYCFPCIKKWYPHLSTDDILEKCPFCR) form an RING-type; degenerate zinc finger. The segment at 317-347 (EERVFCNHCATSIVDLHRSCPKCSYELCLNC) adopts a B box-type; degenerate zinc-finger fold. A JmjC domain is found at 614–837 (PRSGILNIAT…ECLRLTDEFR (224 aa)). Fe cation is bound by residues His658, Asp660, and His805.

Belongs to the JARID1 histone demethylase family. It depends on Fe(2+) as a cofactor. In terms of tissue distribution, expressed in inflorescences, roots, siliques, leaves and stems.

The protein localises to the nucleus. Its function is as follows. May function as histone H3 lysine demethylase and be involved in regulation of gene expression. This Arabidopsis thaliana (Mouse-ear cress) protein is Lysine-specific demethylase JMJ26.